The primary structure comprises 151 residues: MRLFIDGDAFPNTLKPILFRSIQRLNLEVFVVSNKPVTIGKSKLIRYLIVEQGADEADNHIVELVEEGDLVITADIPLADRVISKAAHAIDHRGELYSVDNIKHYLAMRNLMEKIRESGEMTKGPKPFNQKDAHQFANQLNKFLAKNIIKI.

Belongs to the UPF0178 family.

The sequence is that of UPF0178 protein Suden_0449 from Sulfurimonas denitrificans (strain ATCC 33889 / DSM 1251) (Thiomicrospira denitrificans (strain ATCC 33889 / DSM 1251)).